The primary structure comprises 923 residues: Immunomodulating metalloprotease (923 aa).

A signal peptide spans 1-41 (MSLSTTAFPSLQGENMSRSPIPRHRALLAGFCLAGALSAQA). Positions 450–794 (QGFTAIGRMA…FYTQWVHYWA (345 aa)) constitute a Peptidase M60 domain. H696 provides a ligand contact to Zn(2+). E697 is an active-site residue. H700 contributes to the Zn(2+) binding site.

It belongs to the peptidase M88 family. Zn(2+) serves as cofactor.

Its subcellular location is the secreted. Proteolytic activity is blocked in the presence of EDTA. Its function is as follows. Protease that degrades several proteins of the host immune system. Cleaves P-selectin glycoprotein ligand-1 (PSGL-1), leading to its functional inhibition; PSGL-1 is a leukocyte cell-surface receptor essential for leukocyte recruitment to the site of infection. Next to PSGL-1, targets host CD43 and CD44 that are also involved in leukocyte homing. Thus, prevents neutrophil extravasation and thereby protects P.aeruginosa from neutrophil attack. Is also able to inhibit the decay accelerating factor (CD55), but not the cell-surface receptors CD46 and CD31. The chain is Immunomodulating metalloprotease from Pseudomonas aeruginosa (strain ATCC 15692 / DSM 22644 / CIP 104116 / JCM 14847 / LMG 12228 / 1C / PRS 101 / PAO1).